We begin with the raw amino-acid sequence, 336 residues long: Potassium channel subfamily K member 1 (336 aa).

Residues Met-1–Ala-20 are Cytoplasmic-facing. Residues Trp-21–Phe-41 traverse the membrane as a helical segment. Residues Ser-42–Asp-103 are Extracellular-facing. Asn-95 carries an N-linked (GlcNAc...) asparagine glycan. Positions Phe-104–Ser-116 form an intramembrane region, helical. An intramembrane segment occupies Thr-117–His-122. The interval Thr-117–His-122 is selectivity filter 1. Topologically, residues Thr-123 to Ala-132 are extracellular. A helical membrane pass occupies residues Phe-133–Val-156. Residues Thr-157–Ile-181 lie on the Cytoplasmic side of the membrane. The chain crosses the membrane as a helical span at residues Val-182–Val-202. Over Phe-203 to Asn-211 the chain is Extracellular. Residues Phe-212–Ser-224 constitute an intramembrane region (helical). The interval Thr-225–Asp-230 is selectivity filter 2. The stretch at Thr-225 to Tyr-231 is an intramembrane region. The Extracellular portion of the chain corresponds to Val-232–Glu-243. The chain crosses the membrane as a helical span at residues Leu-244–Phe-267. The Cytoplasmic segment spans residues Cys-268 to His-336. Residue Lys-274 forms a Glycyl lysine isopeptide (Lys-Gly) (interchain with G-Cter in SUMO) linkage. An important for intracellular retention in recycling endosomes region spans residues Ile-293–Leu-299. Positions Gln-307–His-336 are disordered.

This sequence belongs to the two pore domain potassium channel (TC 1.A.1.8) family. As to quaternary structure, homodimer; disulfide-linked. Heterodimer with KCNK2; disulfide-linked. In astrocytes, forms mostly heterodimeric potassium channels with KCNK2, with only a minor proportion of functional channels containing homodimeric KCNK1. Interacts with KCNK3 and KCNK9, forming functional heterodimeric channels. Interacts with GNG4. Identified in a complex with PSD and ARF6; interacts only with PSD that is bound to ARF6. Interacts with UBE2I. In terms of processing, sumoylation is controversial. Sumoylated by UBE2I. Not sumoylated when expressed in xenopus oocytes or mammalian cells. Sumoylation inactivates the channel, but does not interfere with expression at the cell membrane. Sumoylation of a single subunit is sufficient to silence the dimeric channel. Sumoylation of KCNK1 is sufficient to silence heterodimeric channels formed by KCNK1 and KCNK3 or KCNK9. Desumoylated by SENP1; this activates the channel. Desumoylated by SENP1; this strongly increases halothane-mediated activation of heterodimeric channels formed with KCNK9. SENP1 treatment has no effect.

It localises to the cell membrane. Its subcellular location is the recycling endosome. The protein resides in the synaptic cell membrane. It is found in the cytoplasmic vesicle. The protein localises to the perikaryon. It localises to the cell projection. Its subcellular location is the dendrite. The protein resides in the apical cell membrane. The enzyme catalyses K(+)(in) = K(+)(out). The catalysed reaction is NH4(+)(in) = NH4(+)(out). It carries out the reaction Na(+)(in) = Na(+)(out). It catalyses the reaction Rb(+)(in) = Rb(+)(out). The enzyme catalyses Cs(+)(in) = Cs(+)(out). The catalysed reaction is Li(+)(in) = Li(+)(out). It carries out the reaction L-glutamate(out) = L-glutamate(in). It catalyses the reaction chloride(in) = chloride(out). In terms of biological role, ion channel that contributes to passive transmembrane potassium transport and to the regulation of the resting membrane potential in brain astrocytes, but also in kidney and in other tissues. Forms dimeric channels through which potassium ions pass in accordance with their electrochemical gradient. The channel is selective for K(+) ions at physiological potassium concentrations and at neutral pH, but becomes permeable to Na(+) at subphysiological K(+) levels and upon acidification of the extracellular medium. The homodimer has very low potassium channel activity, when expressed in heterologous systems, and can function as weakly inward rectifying potassium channel. Channel activity is modulated by activation of serotonin receptors. Heterodimeric channels containing KCNK1 and KCNK2 have much higher activity, and may represent the predominant form in astrocytes. Heterodimeric channels containing KCNK1 and KCNK3 or KCNK9 have much higher activity. Heterodimeric channels formed by KCNK1 and KCNK9 may contribute to halothane-sensitive currents. Mediates outward rectifying potassium currents in dentate gyrus granule cells and contributes to the regulation of their resting membrane potential. Contributes to the regulation of action potential firing in dentate gyrus granule cells and down-regulates their intrinsic excitability. In astrocytes, the heterodimer formed by KCNK1 and KCNK2 is required for rapid glutamate release in response to activation of G-protein coupled receptors, such as F2R and CNR1. Required for normal ion and water transport in the kidney. Contributes to the regulation of the resting membrane potential of pancreatic beta cells. The low channel activity of homodimeric KCNK1 may be due to sumoylation. The low channel activity may be due to rapid internalization from the cell membrane and retention in recycling endosomes. Permeable to monovalent cations with ion selectivity for K(+) &gt; Rb(+) &gt;&gt; NH4(+) &gt;&gt; Cs(+) = Na(+) = Li(+). This chain is Potassium channel subfamily K member 1, found in Bos taurus (Bovine).